The chain runs to 346 residues: Methylthioribose-1-phosphate isomerase (346 aa).

Substrate-binding positions include 46–48 (RGA), arginine 89, and glutamine 196. Aspartate 237 acts as the Proton donor in catalysis. 247–248 (NK) is a binding site for substrate.

It belongs to the eIF-2B alpha/beta/delta subunits family. MtnA subfamily.

The catalysed reaction is 5-(methylsulfanyl)-alpha-D-ribose 1-phosphate = 5-(methylsulfanyl)-D-ribulose 1-phosphate. Its pathway is amino-acid biosynthesis; L-methionine biosynthesis via salvage pathway; L-methionine from S-methyl-5-thio-alpha-D-ribose 1-phosphate: step 1/6. Its function is as follows. Catalyzes the interconversion of methylthioribose-1-phosphate (MTR-1-P) into methylthioribulose-1-phosphate (MTRu-1-P). The polypeptide is Methylthioribose-1-phosphate isomerase (Geotalea uraniireducens (strain Rf4) (Geobacter uraniireducens)).